The sequence spans 287 residues: Cell wall-binding protein YocH (287 aa).

The signal sequence occupies residues 1-25 (MKKTIMSFVAVAALSTTAFGAHASA). 2 consecutive LysM domains span residues 26–69 (KEIT…KLTI) and 78–121 (GQYT…TLSV). A compositionally biased stretch (low complexity) spans 130–143 (TATENAQTNAPQAA). Positions 130–193 (TATENAQTNA…SNTNNQEASK (64 aa)) are disordered. Residues 165 to 181 (QETKAEAETSVNTEEKA) are compositionally biased toward basic and acidic residues. The segment covering 182 to 193 (VQSNTNNQEASK) has biased composition (polar residues).

It is found in the secreted. The protein localises to the cell wall. The protein is Cell wall-binding protein YocH (yocH) of Bacillus subtilis (strain 168).